The chain runs to 256 residues: Protein FixA (256 aa).

This sequence belongs to the ETF beta-subunit/FixA family. As to quaternary structure, heterodimer of FixA and FixB.

It functions in the pathway amine and polyamine metabolism; carnitine metabolism. Its function is as follows. Required for anaerobic carnitine reduction. May bring reductant to CaiA. The sequence is that of Protein FixA from Escherichia coli O7:K1 (strain IAI39 / ExPEC).